The sequence spans 493 residues: 3-octaprenyl-4-hydroxybenzoate carboxy-lyase (493 aa).

Residue Asn172 coordinates Mn(2+). Prenylated FMN is bound by residues 175-177 (IYR), 189-191 (RWL), and 194-195 (RG). A Mn(2+)-binding site is contributed by Glu238. Asp287 (proton donor) is an active-site residue.

It belongs to the UbiD family. As to quaternary structure, homohexamer. It depends on prenylated FMN as a cofactor. Mn(2+) is required as a cofactor.

The protein localises to the cell membrane. The catalysed reaction is a 4-hydroxy-3-(all-trans-polyprenyl)benzoate + H(+) = a 2-(all-trans-polyprenyl)phenol + CO2. Its pathway is cofactor biosynthesis; ubiquinone biosynthesis. Functionally, catalyzes the decarboxylation of 3-octaprenyl-4-hydroxy benzoate to 2-octaprenylphenol, an intermediate step in ubiquinone biosynthesis. In Shewanella sp. (strain MR-4), this protein is 3-octaprenyl-4-hydroxybenzoate carboxy-lyase.